We begin with the raw amino-acid sequence, 183 residues long: Holliday junction branch migration complex subunit RuvA (183 aa).

Positions 1–64 are domain I; that stretch reads MVVGIEGIIT…EDSNKFYGFL (64 aa). Residues 65 to 139 are domain II; it reads DKDEQKMFEM…DTKTKLENVS (75 aa). A region of interest (flexible linker) is located at residue Ser139. The tract at residues 139–183 is domain III; the sequence is SDDKSEALAALLTLGFKQEKIISVLASAQATGTSELIKEALKKLG.

It belongs to the RuvA family. As to quaternary structure, homotetramer. Forms an RuvA(8)-RuvB(12)-Holliday junction (HJ) complex. HJ DNA is sandwiched between 2 RuvA tetramers; dsDNA enters through RuvA and exits via RuvB. An RuvB hexamer assembles on each DNA strand where it exits the tetramer. Each RuvB hexamer is contacted by two RuvA subunits (via domain III) on 2 adjacent RuvB subunits; this complex drives branch migration. In the full resolvosome a probable DNA-RuvA(4)-RuvB(12)-RuvC(2) complex forms which resolves the HJ.

The protein resides in the cytoplasm. Its function is as follows. The RuvA-RuvB-RuvC complex processes Holliday junction (HJ) DNA during genetic recombination and DNA repair, while the RuvA-RuvB complex plays an important role in the rescue of blocked DNA replication forks via replication fork reversal (RFR). RuvA specifically binds to HJ cruciform DNA, conferring on it an open structure. The RuvB hexamer acts as an ATP-dependent pump, pulling dsDNA into and through the RuvAB complex. HJ branch migration allows RuvC to scan DNA until it finds its consensus sequence, where it cleaves and resolves the cruciform DNA. The chain is Holliday junction branch migration complex subunit RuvA from Campylobacter jejuni subsp. jejuni serotype O:23/36 (strain 81-176).